The sequence spans 1710 residues: Protein NETWORKED 1B (1710 aa).

An NAB domain is found at 13-92; the sequence is YSWWWDSHIP…ERYDHTTVEL (80 aa). Residues 113-159 are disordered; the sequence is EDSASSSSEPRTEADTEALQKDGTKSKRSFSQMNKLDGTSDSHEADS. 2 stretches are compositionally biased toward basic and acidic residues: residues 122 to 137 and 150 to 159; these read PRTE…DGTK and GTSDSHEADS. Coiled-coil stretches lie at residues 152 to 446, 474 to 546, 579 to 883, 974 to 1021, 1095 to 1259, and 1285 to 1336; these read SDSH…ELGA, QMLR…EIHC, VKKL…IDSL, HQCG…FESL, VSSL…LQEK, and LILE…LSAY. The tract at residues 1409-1448 is disordered; that stretch reads RLSRQITRSTSQKRRDRRKIENIQPDDQVTGESRQPRLRP. The stretch at 1559–1665 forms a coiled coil; sequence RRLSSLRISL…VLKLEDGTKS (107 aa).

It belongs to the NET family. In terms of tissue distribution, expressed in root meristems and at very low levels throughout mature vasculature.

Functionally, plant-specific actin binding protein. May be part of a membrane-cytoskeletal adapter complex. The chain is Protein NETWORKED 1B from Arabidopsis thaliana (Mouse-ear cress).